We begin with the raw amino-acid sequence, 255 residues long: NAD kinase (255 aa).

Asp-44 (proton acceptor) is an active-site residue. Residues 44–45, His-49, 114–115, Asp-144, Ala-152, 155–160, and Gln-216 contribute to the NAD(+) site; these read DG, NE, and SAYNLS.

Belongs to the NAD kinase family. A divalent metal cation is required as a cofactor.

The protein localises to the cytoplasm. It carries out the reaction NAD(+) + ATP = ADP + NADP(+) + H(+). Its function is as follows. Involved in the regulation of the intracellular balance of NAD and NADP, and is a key enzyme in the biosynthesis of NADP. Catalyzes specifically the phosphorylation on 2'-hydroxyl of the adenosine moiety of NAD to yield NADP. The polypeptide is NAD kinase (Rickettsia canadensis (strain McKiel)).